A 606-amino-acid polypeptide reads, in one-letter code: Urocanate reductase (606 aa).

The tat-type signal signal peptide spans 1 to 40; sequence MSNLSRRNFITGGAIAALGGTLAIAGCAPKGESSSTVAGA. Threonine 111 is subject to FMN phosphoryl threonine. Alanine 163, glutamate 182, threonine 191, glycine 195, glycine 196, alanine 197, alanine 305, and aspartate 373 together coordinate FAD. Arginine 433 (proton donor) is an active-site residue. 2 residues coordinate FAD: glutamate 572 and isoleucine 588.

This sequence belongs to the FAD-dependent oxidoreductase 2 family. FRD/SDH subfamily. FAD is required as a cofactor. FMN serves as cofactor. In terms of processing, predicted to be exported by the Tat system. The position of the signal peptide cleavage has not been experimentally proven.

The enzyme catalyses dihydrourocanate + A = urocanate + AH2. Functionally, catalyzes the two-electron reduction of urocanate to dihydrourocanate (also named imidazole propionate or deamino-histidine). Dihydrourocanate is present at higher concentrations in subjects with type 2 diabetes, and directly impairs glucose tolerance and insulin signaling at the level of insulin receptor substrate (IRS) through activation of p38 gamma (MAPK12)-p62-mTORC1. Therefore, the UrdA enzyme from the gut bacteria E.lenta strain DSM 2243 may contribute to the pathogenesis of type 2 diabetes by producing the microbial metabolite dihydrourocanate. In Eggerthella lenta (strain ATCC 25559 / DSM 2243 / CCUG 17323 / JCM 9979 / KCTC 3265 / NCTC 11813 / VPI 0255 / 1899 B) (Eubacterium lentum), this protein is Urocanate reductase.